The sequence spans 555 residues: Perforin-1 (555 aa).

Residues 1–21 (MAARLLLLGILLLLLPLPVPA) form the signal peptide. 3 disulfide bridges follow: cysteine 23–cysteine 76, cysteine 31–cysteine 73, and cysteine 102–cysteine 176. Residues 27–375 (ARSECKRSHK…QYLTDRARWR (349 aa)) form the MACPF domain. A beta stranded membrane pass occupies residues 129 to 149 (WKVGLDVTPKPTSNVHVSVAG). Asparagine 205 carries N-linked (GlcNAc...) asparagine glycosylation. 4 cysteine pairs are disulfide-bonded: cysteine 242–cysteine 408, cysteine 377–cysteine 393, cysteine 381–cysteine 395, and cysteine 397–cysteine 407. The beta stranded transmembrane segment at 257–279 (CLTVEAQVNIGIHGSISAEAKAC) threads the bilayer. Positions 376-408 (DCSRPCPPGRQKSPRDPCQCVCHGSAVTTQDCC) constitute an EGF-like domain. The region spanning 397–519 (CHGSAVTTQD…CNLNHGHLKF (123 aa)) is the C2 domain. Glycine 429, aspartate 430, threonine 433, alanine 434, aspartate 436, aspartate 484, aspartate 486, aspartate 490, aspartate 491, and aspartate 492 together coordinate Ca(2+). 2 disulfides stabilise this stretch: cysteine 497–cysteine 510 and cysteine 525–cysteine 534. Asparagine 549 carries N-linked (GlcNAc...) asparagine glycosylation.

The protein belongs to the complement C6/C7/C8/C9 family. Monomer, as soluble protein. Homooligomer; homooligomerizes to form a pore-forming ring. The cofactor is Ca(2+). In terms of processing, N-glycosylated.

It is found in the cytolytic granule. Its subcellular location is the secreted. The protein resides in the cell membrane. It localises to the endosome lumen. Pore-forming protein that plays a key role in granzyme-mediated programmed cell death, and in defense against virus-infected or neoplastic cells. Plays an important role in killing other cells that are recognized as non-self by the immune system, e.g. in transplant rejection or some forms of autoimmune disease. Can insert into the membrane of target cells in its calcium-bound form, oligomerize and form large pores. Promotes cytolysis and apoptosis of target cells by mediating the passage and uptake of cytotoxic granzymes. Facilitates the delivery of cationic cargo protein, while anionic or neural proteins are not delivered efficiently. Perforin pores allow the release of mature caspase-7 (CASP7) into the extracellular milieu. In Homo sapiens (Human), this protein is Perforin-1 (PRF1).